The primary structure comprises 340 residues: Mitochondrial carrier protein CoAc1 (340 aa).

6 helical membrane-spanning segments follow: residues 22–42 (ALDL…AGAF), 85–105 (FYKG…LHYM), 130–147 (LLAG…TYPL), 199–219 (GVGP…YIYE), 237–257 (LSCG…LDVV), and 297–317 (FAGL…GFTT). 3 Solcar repeats span residues 27–113 (PVYA…YRCW), 124–224 (TGPV…LKSQ), and 231–324 (DSVI…MKAL).

This sequence belongs to the mitochondrial carrier (TC 2.A.29) family. As to expression, expressed throughout the plant.

It localises to the mitochondrion inner membrane. Functionally, required for the accumulation of coenzyme A in the mitochondrial matrix. This Zea mays (Maize) protein is Mitochondrial carrier protein CoAc1.